We begin with the raw amino-acid sequence, 464 residues long: Cysteine--tRNA ligase (464 aa).

Position 27 (C27) interacts with Zn(2+). Residues 29–39 carry the 'HIGH' region motif; sequence PTVYDDAHLGH. Positions 203, 234, and 238 each coordinate Zn(2+). Residues 266–270 carry the 'KMSKS' region motif; the sequence is KMSKS. K269 provides a ligand contact to ATP.

Belongs to the class-I aminoacyl-tRNA synthetase family. As to quaternary structure, monomer. Zn(2+) serves as cofactor.

The protein resides in the cytoplasm. It carries out the reaction tRNA(Cys) + L-cysteine + ATP = L-cysteinyl-tRNA(Cys) + AMP + diphosphate. The sequence is that of Cysteine--tRNA ligase from Campylobacter concisus (strain 13826).